The primary structure comprises 245 residues: 8-amino-3,8-dideoxy-manno-octulosonate cytidylyltransferase (245 aa).

Belongs to the KdsB family.

The protein resides in the cytoplasm. It carries out the reaction 8-amino-3,8-dideoxy-alpha-D-manno-octulosonate + CTP = CMP-8-amino-3,8-dideoxy-alpha-D-manno-oct-2-ulosonate + diphosphate. Its pathway is bacterial outer membrane biogenesis; lipopolysaccharide biosynthesis. Activates KDO8N (a required 8-carbon sugar) for incorporation into bacterial lipopolysaccharide in the Shewanella genus. This is 8-amino-3,8-dideoxy-manno-octulosonate cytidylyltransferase from Shewanella frigidimarina (strain NCIMB 400).